Here is a 57-residue protein sequence, read N- to C-terminus: Lantibiotic nukacin (57 aa).

Residues 1–30 (MENSKVMKDIEVANLLEEVQEDELNEVLGA) constitute a propeptide that is removed on maturation. Residues 39-44 (TVSHDC) constitute a cross-link (beta-methyllanthionine (Thr-Cys)). 2 consecutive cross-links (lanthionine (Ser-Cys)) follow at residues 41 to 55 (SHDCHMNSFQFVFTC) and 48 to 56 (SFQFVFTCC). Thr54 carries the post-translational modification 2,3-didehydrobutyrine.

In terms of processing, maturation of lantibiotics involves the enzymatic conversion of Thr, and Ser into dehydrated AA and the formation of thioether bonds with cysteine. This is followed by membrane translocation and cleavage of the modified precursor.

It is found in the secreted. Its function is as follows. Lanthionine-containing peptide antibiotic (lantibiotic) active on Gram-positive bacteria. The bactericidal activity of lantibiotics is based on depolarization of energized bacterial cytoplasmic membranes, initiated by the formation of aqueous transmembrane pores. This Staphylococcus simulans protein is Lantibiotic nukacin.